We begin with the raw amino-acid sequence, 308 residues long: Putative acetyl-hydrolase LipR (308 aa).

A signal peptide spans 1–40; sequence MNLRKNVIRSVLRGARPLFASRRLGIAGRRVLLATLTAGA. Positions 76-78 match the Involved in the stabilization of the negatively charged intermediate by the formation of the oxyanion hole motif; the sequence is HGG. Active-site residues include S146, D239, and H269.

The protein belongs to the 'GDXG' lipolytic enzyme family.

Functionally, required for maintaining the appropriate mycolic acid composition and permeability of the envelope on its exposure to acidic pH. This is Putative acetyl-hydrolase LipR (lipR) from Mycobacterium tuberculosis (strain ATCC 25618 / H37Rv).